The chain runs to 367 residues: UDP-N-acetylglucosamine--N-acetylmuramyl-(pentapeptide) pyrophosphoryl-undecaprenol N-acetylglucosamine transferase (367 aa).

Residues 15 to 17 (TGG), asparagine 127, arginine 163, serine 191, isoleucine 249, and glutamine 294 each bind UDP-N-acetyl-alpha-D-glucosamine.

The protein belongs to the glycosyltransferase 28 family. MurG subfamily.

It localises to the cell inner membrane. It carries out the reaction di-trans,octa-cis-undecaprenyl diphospho-N-acetyl-alpha-D-muramoyl-L-alanyl-D-glutamyl-meso-2,6-diaminopimeloyl-D-alanyl-D-alanine + UDP-N-acetyl-alpha-D-glucosamine = di-trans,octa-cis-undecaprenyl diphospho-[N-acetyl-alpha-D-glucosaminyl-(1-&gt;4)]-N-acetyl-alpha-D-muramoyl-L-alanyl-D-glutamyl-meso-2,6-diaminopimeloyl-D-alanyl-D-alanine + UDP + H(+). The protein operates within cell wall biogenesis; peptidoglycan biosynthesis. Functionally, cell wall formation. Catalyzes the transfer of a GlcNAc subunit on undecaprenyl-pyrophosphoryl-MurNAc-pentapeptide (lipid intermediate I) to form undecaprenyl-pyrophosphoryl-MurNAc-(pentapeptide)GlcNAc (lipid intermediate II). This is UDP-N-acetylglucosamine--N-acetylmuramyl-(pentapeptide) pyrophosphoryl-undecaprenol N-acetylglucosamine transferase from Burkholderia thailandensis (strain ATCC 700388 / DSM 13276 / CCUG 48851 / CIP 106301 / E264).